The primary structure comprises 110 residues: MQVSATHRFARISPQKARLVADLIRGKDVETAVNILAFSDKKASELMSKVLNSAIANAENNEGADIDELKVTEAYVNEGPIMKRMRARAKGRGNRILKRISHITVTVGDK.

The protein belongs to the universal ribosomal protein uL22 family. Part of the 50S ribosomal subunit.

Functionally, this protein binds specifically to 23S rRNA; its binding is stimulated by other ribosomal proteins, e.g. L4, L17, and L20. It is important during the early stages of 50S assembly. It makes multiple contacts with different domains of the 23S rRNA in the assembled 50S subunit and ribosome. The globular domain of the protein is located near the polypeptide exit tunnel on the outside of the subunit, while an extended beta-hairpin is found that lines the wall of the exit tunnel in the center of the 70S ribosome. This chain is Large ribosomal subunit protein uL22, found in Hydrogenovibrio crunogenus (strain DSM 25203 / XCL-2) (Thiomicrospira crunogena).